Reading from the N-terminus, the 763-residue chain is Phosphoglycerol transferase I (763 aa).

Helical transmembrane passes span 1–21, 26–46, 77–97, and 108–128; these read MSEL…AWKA, WWFA…ITLF, ILPG…LGWI, and FGYS…SPAF.

It belongs to the OpgB family.

The protein localises to the cell inner membrane. It catalyses the reaction a phosphatidylglycerol + a membrane-derived-oligosaccharide D-glucose = a 1,2-diacyl-sn-glycerol + a membrane-derived-oligosaccharide 6-(glycerophospho)-D-glucose.. It participates in glycan metabolism; osmoregulated periplasmic glucan (OPG) biosynthesis. Transfers a phosphoglycerol residue from phosphatidylglycerol to the membrane-bound nascent glucan backbones. This Escherichia coli O6:K15:H31 (strain 536 / UPEC) protein is Phosphoglycerol transferase I.